The primary structure comprises 338 residues: Tetraacyldisaccharide 4'-kinase (338 aa).

67-74 provides a ligand contact to ATP; it reads IAGGAGKT.

The protein belongs to the LpxK family.

It carries out the reaction a lipid A disaccharide + ATP = a lipid IVA + ADP + H(+). Its pathway is glycolipid biosynthesis; lipid IV(A) biosynthesis; lipid IV(A) from (3R)-3-hydroxytetradecanoyl-[acyl-carrier-protein] and UDP-N-acetyl-alpha-D-glucosamine: step 6/6. Functionally, transfers the gamma-phosphate of ATP to the 4'-position of a tetraacyldisaccharide 1-phosphate intermediate (termed DS-1-P) to form tetraacyldisaccharide 1,4'-bis-phosphate (lipid IVA). The protein is Tetraacyldisaccharide 4'-kinase of Acidovorax sp. (strain JS42).